The chain runs to 1008 residues: Serine/threonine-protein kinase PRP4 homolog (1008 aa).

The disordered stretch occupies residues 1 to 103 (MAAAEAPSLR…PAKRTKLDDL (103 aa)). Residue Ala-2 is modified to N-acetylalanine. A phosphoserine mark is found at Ser-8, Ser-20, Ser-23, and Ser-32. Composition is skewed to basic residues over residues 39 to 59 (KHSRHKKKKHKHRSKHKKHKH) and 67 to 81 (RKHKHKHKHKKHKRK). The span at 82-91 (EVADASDKEG) shows a compositional bias: basic and acidic residues. 2 positions are modified to phosphoserine: Ser-87 and Ser-93. Residue Lys-99 is modified to N6-acetyllysine; alternate. Lys-99 is covalently cross-linked (Glycyl lysine isopeptide (Lys-Gly) (interchain with G-Cter in SUMO2); alternate). Residue Lys-111 forms a Glycyl lysine isopeptide (Lys-Gly) (interchain with G-Cter in SUMO2) linkage. A Glycyl lysine isopeptide (Lys-Gly) (interchain with G-Cter in SUMO2); alternate cross-link involves residue Lys-117. Lys-117 participates in a covalent cross-link: Glycyl lysine isopeptide (Lys-Gly) (interchain with G-Cter in SUMO1); alternate. Residue Ser-131 is modified to Phosphoserine. Residue Tyr-140 is modified to Phosphotyrosine. 2 disordered regions span residues 140 to 536 (YESG…EDEE) and 560 to 584 (SNLSVPSEPSSPQSSTRSRSPSPDD). Ser-142, Ser-144, and Ser-166 each carry phosphoserine. Residues 157–168 (GNRSSTRSSSTK) show a composition bias toward low complexity. Residues Lys-170 and Lys-177 each participate in a glycyl lysine isopeptide (Lys-Gly) (interchain with G-Cter in SUMO2) cross-link. Composition is skewed to basic residues over residues 179–202 (STKKRSKSRSKERTRHRSDKKKSK) and 214–230 (RSKSKERKKSKSPSKRS). A phosphoserine mark is found at Ser-239, Ser-241, Ser-257, Ser-277, Ser-283, Ser-292, and Ser-294. Residues 247–270 (RSQEKVGKARSPVDDKAKVEDKSK) are compositionally biased toward basic and acidic residues. Residues 302–315 (SKDRRSRSKERKSK) show a composition bias toward basic residues. Positions 316 to 325 (RPEADKEKKP) are enriched in basic and acidic residues. Ser-328, Ser-354, Ser-356, Ser-366, and Ser-368 each carry phosphoserine. Residues 342–367 (PSRRPGRSPKRRSLSPKQRDKSRRSR) show a composition bias toward basic residues. Phosphothreonine is present on Thr-385. The residue at position 387 (Ser-387) is a Phosphoserine. 2 stretches are compositionally biased toward basic and acidic residues: residues 395–408 (RSLERKRREPERRR) and 415–429 (RPRDDILSRRERSKD). Phosphoserine occurs at positions 427, 431, and 437. Over residues 438–498 (PARRRASRSP…RGGRRRRSRS (61 aa)) the composition is skewed to basic residues. Phosphoserine occurs at positions 519, 520, 521, 566, 570, 577, 579, and 581. Positions 519–536 (SSSDDNLEDFDVEEEDEE) are enriched in acidic residues. A compositionally biased stretch (low complexity) spans 563-582 (SVPSEPSSPQSSTRSRSPSP). Glycyl lysine isopeptide (Lys-Gly) (interchain with G-Cter in SUMO2) cross-links involve residues Lys-594 and Lys-660. Residues 688–1004 (YNVYGYTGQG…INQALQHAFI (317 aa)) form the Protein kinase domain. ATP is bound by residues 694 to 702 (TGQGVFSNV) and Lys-718. Lys-718 bears the N6-acetyllysine mark. Asp-816 serves as the catalytic Proton acceptor. Tyr-850 bears the Phosphotyrosine mark. Ser-853 is modified (phosphoserine).

Belongs to the protein kinase superfamily. CMGC Ser/Thr protein kinase family. In terms of assembly, interacts with CLK1 C-terminus. Associates with the U5 snRNP and NCOR1 deacetylase complexes. Identified in the spliceosome C complex. In terms of processing, phosphorylated by CLK1. Autophosphorylated; phosphorylation inhibits interaction with its targets, such as PRPF6 or SMARCA4.

It is found in the nucleus. It localises to the chromosome. The protein localises to the centromere. The protein resides in the kinetochore. The catalysed reaction is L-seryl-[protein] + ATP = O-phospho-L-seryl-[protein] + ADP + H(+). The enzyme catalyses L-threonyl-[protein] + ATP = O-phospho-L-threonyl-[protein] + ADP + H(+). Its function is as follows. Serine/threonine kinase involved in spliceosomal assembly as well as mitosis and signaling regulation. Connects chromatin mediated regulation of transcription and pre-mRNA splicing. During spliceosomal assembly, interacts with and phosphorylates PRPF6 and PRPF31, components of the U4/U6-U5 tri-small nuclear ribonucleoprotein (snRNP), to facilitate the formation of the spliceosome B complex. Plays a role in regulating transcription and the spindle assembly checkpoint (SAC). Associates with U5 snRNP and NCOR1 deacetylase complexes which may allow a coordination of pre-mRNA splicing with chromatin remodeling events involved in transcriptional regulation. Associates and probably phosphorylates SMARCA4 and NCOR1. Phosphorylates SRSF1. Associates with kinetochores during mitosis and is necessary for recruitment and maintenance of the checkpoint proteins such as MAD1L1 and MAD12L1 at the kinetochores. Phosphorylates and regulates the activity of the transcription factors such as ELK1 and KLF13. Phosphorylates nuclear YAP1 and WWTR1/TAZ which induces nuclear exclusion and regulates Hippo signaling pathway, involved in tissue growth control. This Bos taurus (Bovine) protein is Serine/threonine-protein kinase PRP4 homolog (PRP4K).